We begin with the raw amino-acid sequence, 958 residues long: Glycine dehydrogenase (decarboxylating) (958 aa).

The residue at position 705 (Lys-705) is an N6-(pyridoxal phosphate)lysine.

This sequence belongs to the GcvP family. In terms of assembly, the glycine cleavage system is composed of four proteins: P, T, L and H. Pyridoxal 5'-phosphate is required as a cofactor.

It catalyses the reaction N(6)-[(R)-lipoyl]-L-lysyl-[glycine-cleavage complex H protein] + glycine + H(+) = N(6)-[(R)-S(8)-aminomethyldihydrolipoyl]-L-lysyl-[glycine-cleavage complex H protein] + CO2. The glycine cleavage system catalyzes the degradation of glycine. The P protein binds the alpha-amino group of glycine through its pyridoxal phosphate cofactor; CO(2) is released and the remaining methylamine moiety is then transferred to the lipoamide cofactor of the H protein. The sequence is that of Glycine dehydrogenase (decarboxylating) from Bdellovibrio bacteriovorus (strain ATCC 15356 / DSM 50701 / NCIMB 9529 / HD100).